We begin with the raw amino-acid sequence, 146 residues long: Kappa-casein (146 aa).

O-linked (GalNAc...) threonine glycosylation is found at Thr97, Thr107, Thr112, and Thr118. Residue Thr121 is modified to Phosphothreonine. Ser125 is modified (phosphoserine; alternate). Residue Ser125 is glycosylated (O-linked (GalNAc...) serine; alternate). O-linked (GalNAc...) threonine glycosylation is present at Thr142. Ser143 bears the Phosphoserine mark.

This sequence belongs to the kappa-casein family. Mammary gland specific. Secreted in milk.

Its subcellular location is the secreted. Its function is as follows. Kappa-casein stabilizes micelle formation, preventing casein precipitation in milk. This is Kappa-casein (CSN3) from Panthera uncia (Snow leopard).